Here is a 405-residue protein sequence, read N- to C-terminus: S-arrestin (405 aa).

T234 carries the post-translational modification Phosphothreonine.

The protein belongs to the arrestin family. Monomer. Homodimer. Homotetramer. Interacts with RHO (via the phosphorylated C-terminus). In terms of tissue distribution, detected in retina, in the proximal portion of the outer segment of rod photoreceptor cells (at protein level).

Its subcellular location is the cell projection. The protein resides in the cilium. The protein localises to the photoreceptor outer segment. It localises to the membrane. In terms of biological role, binds to photoactivated, phosphorylated RHO and terminates RHO signaling via G-proteins by competing with G-proteins for the same binding site on RHO. May play a role in preventing light-dependent degeneration of retinal photoreceptor cells. The polypeptide is S-arrestin (SAG) (Homo sapiens (Human)).